Here is a 591-residue protein sequence, read N- to C-terminus: Mono(ADP-ribosyl)transferase SpvB (591 aa).

The region spanning 373-576 (PMMGGNSSRP…LRLSDDATAD (204 aa)) is the TR mART core domain. Catalysis depends on residues Arg-471, Ser-501, and Glu-538.

Belongs to the SpvB family.

It is found in the secreted. It carries out the reaction L-arginyl-[protein] + NAD(+) = N(omega)-(ADP-D-ribosyl)-L-arginyl-[protein] + nicotinamide + H(+). Its function is as follows. Mono-ADP-ribosylates eukaryotic muscle and non-muscle actin on 'Arg-177'. ADP-ribosylation prevents the polymerization of G-actin to F-actin, causing actin filament depolymerization, destruction of the cytoskeleton and cytotoxicity. Does not possess NAD(+)-glycohydrolase activity, unlike most mART enzymes. This is Mono(ADP-ribosyl)transferase SpvB (spvB) from Salmonella typhimurium (strain 14028s / SGSC 2262).